A 351-amino-acid polypeptide reads, in one-letter code: MDTPNTFQNDDEIKAQAQVWKHMFGFAETIMLRSTVSLGIPDIIHNNGPVTLSQLVTHLPLKSTSIDRFHHFMRYLVHMQLFTISTDQITKEDKYELTPASKLLVHGHQKSLAPYVMLQTHPEEFSVWSHVINVLDGKKPYWESNDTSMYEKTEGDPEINEILNDAMTSHSTFMLPALVSGLMKENVLDGVASIVDVGGNSGVVAKGIVDAFPHVKCSVMDLNHVIERVIKNPKLDYVAGDMFTSIPNADAILLKSTLHNYEDDDCIKILNIAKEALPSTGGKVILVEIVVDTENLPLFTSARLSMGMDMMLMSGKERTKKEWEDLLRKANFTSHQVIPIMAIESIIVAYS.

S-adenosyl-L-methionine-binding residues include Gly-198, Asp-221, Asp-241, Met-242, and Lys-255. Residue His-259 is the Proton acceptor of the active site.

The protein belongs to the class I-like SAM-binding methyltransferase superfamily. Cation-independent O-methyltransferase family. COMT subfamily. In terms of assembly, homodimer.

It carries out the reaction columbamine + S-adenosyl-L-methionine = palmatine + S-adenosyl-L-homocysteine + H(+). It catalyses the reaction (S)-tetrahydrocolumbamine + S-adenosyl-L-methionine = (S)-tetrahydropalmatine + S-adenosyl-L-homocysteine + H(+). Its pathway is alkaloid biosynthesis; palmatine biosynthesis; palmatine from columbamine: step 1/1. Its function is as follows. Catalyzes the conversion of tetrahydrocolumbamine to (S)-tetrahydropalmatine and of columbamine to palmatine, an isoquinoline alkaloid. The sequence is that of Columbamine O-methyltransferase from Coptis japonica (Japanese goldthread).